Consider the following 300-residue polypeptide: N-acetylmannosamine kinase (300 aa).

Residues 5-12 (ALDIGGTK) and 132-139 (GVGGGIVL) each bind ATP. The Zn(2+) site is built by His156, Cys166, Cys168, and Cys173.

This sequence belongs to the ROK (NagC/XylR) family. NanK subfamily. In terms of assembly, homodimer.

The catalysed reaction is an N-acyl-D-mannosamine + ATP = an N-acyl-D-mannosamine 6-phosphate + ADP + H(+). It functions in the pathway amino-sugar metabolism; N-acetylneuraminate degradation; D-fructose 6-phosphate from N-acetylneuraminate: step 2/5. Catalyzes the phosphorylation of N-acetylmannosamine (ManNAc) to ManNAc-6-P. This is N-acetylmannosamine kinase (nanK) from Haemophilus influenzae (strain ATCC 51907 / DSM 11121 / KW20 / Rd).